The primary structure comprises 144 residues: Large ribosomal subunit protein uL15 (144 aa).

The disordered stretch occupies residues 1-51; sequence MELNSIKPGSGSKHAKRRVGRGIGSGLGKTAGRGHKGQKSRAGGYHKVGFE. The span at 21–31 shows a compositional bias: gly residues; sequence RGIGSGLGKTA.

It belongs to the universal ribosomal protein uL15 family. Part of the 50S ribosomal subunit.

In terms of biological role, binds to the 23S rRNA. The sequence is that of Large ribosomal subunit protein uL15 from Leptothrix cholodnii (strain ATCC 51168 / LMG 8142 / SP-6) (Leptothrix discophora (strain SP-6)).